A 149-amino-acid chain; its full sequence is SsrA-binding protein (149 aa).

This sequence belongs to the SmpB family.

It localises to the cytoplasm. Functionally, required for rescue of stalled ribosomes mediated by trans-translation. Binds to transfer-messenger RNA (tmRNA), required for stable association of tmRNA with ribosomes. tmRNA and SmpB together mimic tRNA shape, replacing the anticodon stem-loop with SmpB. tmRNA is encoded by the ssrA gene; the 2 termini fold to resemble tRNA(Ala) and it encodes a 'tag peptide', a short internal open reading frame. During trans-translation Ala-aminoacylated tmRNA acts like a tRNA, entering the A-site of stalled ribosomes, displacing the stalled mRNA. The ribosome then switches to translate the ORF on the tmRNA; the nascent peptide is terminated with the 'tag peptide' encoded by the tmRNA and targeted for degradation. The ribosome is freed to recommence translation, which seems to be the essential function of trans-translation. The sequence is that of SsrA-binding protein from Mesoplasma florum (strain ATCC 33453 / NBRC 100688 / NCTC 11704 / L1) (Acholeplasma florum).